Consider the following 1122-residue polypeptide: DNA polymerase (1122 aa).

Belongs to the DNA polymerase type-B family. In terms of assembly, heterodimer with the terminal protein; this heterodimer binds to bp 9 to 18 of the genome. Forms a complex with viral pTP, DBP and hosts NFIA and POU2F1/OCT1 for initiation of replication.

It is found in the host nucleus. It carries out the reaction DNA(n) + a 2'-deoxyribonucleoside 5'-triphosphate = DNA(n+1) + diphosphate. Eukaryotic-type DNA polymerase involved in viral genomic replication. DNA synthesis is protein primed, and acts in a strand displacement replication. Assembles in complex with viral pTP, DBP, host NFIA and host POU2F1/OCT1 on viral origin of replication. The polymerase covalently transfers dCMP onto pTP, thereby initiating complementary strand synthesis. The sequence is that of DNA polymerase from Human adenovirus B serotype 7 (HAdV-7).